Consider the following 200-residue polypeptide: 3-isopropylmalate dehydratase small subunit (200 aa).

It belongs to the LeuD family. LeuD type 1 subfamily. Heterodimer of LeuC and LeuD.

It carries out the reaction (2R,3S)-3-isopropylmalate = (2S)-2-isopropylmalate. Its pathway is amino-acid biosynthesis; L-leucine biosynthesis; L-leucine from 3-methyl-2-oxobutanoate: step 2/4. Its function is as follows. Catalyzes the isomerization between 2-isopropylmalate and 3-isopropylmalate, via the formation of 2-isopropylmaleate. This Pectobacterium carotovorum subsp. carotovorum (strain PC1) protein is 3-isopropylmalate dehydratase small subunit.